Reading from the N-terminus, the 162-residue chain is Anthrone oxygenase nsrD (162 aa).

The next 3 membrane-spanning stretches (helical) occupy residues 17 to 37 (FLSG…LDTI), 54 to 74 (GSIY…YVAL), and 86 to 106 (PYVL…WVMV). Asn109 carries N-linked (GlcNAc...) asparagine glycosylation. The helical transmembrane segment at 130–150 (LVVKWAWLHVVRSLYPLFGAF) threads the bilayer.

This sequence belongs to the anthrone oxygenase family.

It is found in the membrane. The enzyme catalyses emodin anthrone + O2 = emodin + H2O + H(+). Its pathway is secondary metabolite biosynthesis. Functionally, anthrone oxygenase; part of the gene cluster that mediates the biosynthesis of the tetrahydroxanthone dimer neosartorin, which exhibits antibacterial activity. The two different monomeric units appear to be synthesized by the same set of enzymes, among which the Baeyer-Villiger monooxygenase nsrF is the key enzyme for the divergence of the biosynthetic routes. The pathway begins with the synthesis of atrochrysone thioester by the polyketide synthase nsrB. The atrochrysone carboxyl ACP thioesterase nsrC then breaks the thioester bond and releases the atrochrysone carboxylic acid from AacuL. Atrochrysone carboxylic acid is decarboxylated by the decarboxylase nsrE, and oxidized by the anthrone oxygenase nsrD to yield emodin. Emodin is then reduced to emodin hydroquinone by the oxidoreductase nsrR. A-ring reduction by the short chain dehydrogenase nsrJ, dehydration by the scytalone dehydratase-like protein nsrI and probable spontaneous re-oxidation, results in overall deoxygenation to chrysophanol. The Baeyer-Villiger monooxygenase nsrF accepts chrysophanol as a substrate to insert one oxygen atom at two different positions to yield the precursors of both monomric units. NsrF is promiscuous/flexible in interacting with the 2 (non methylated and methylated) aromatic rings of chrysophanol, thus diverging the biosynthetic pathway at this point. After the hydrolysis of the lactones, methylesterification by the methyltransferase nsrG yields respectively moniliphenone and 2,2',6'-trihydroxy-4-methyl-6-methoxya-cyldiphenylmethanone. The next steps are the hydroxylation by the FAD-dependent monooxygenase nsrK, followed by isomerization by the monooxygenase nsrQ. The short chain dehydrogenase/reductase nsrO then catalyzes the C-5 ketoreduction to give the xanthone skeleton of blennolide C and 5-acetylblennolide A. The acetyltransferase nsrL has a strict substrate specificity and uses only blennolide A but not blennolide C to yield 5-acetylblennolide A as the single-acetylated product. In the final step of the biosynthesis, the heterodimerization of the 2 xanthones, blennolide C and 5-acetylblennolide A, is catalyzed by the cytochrome P450 monooxygenase nsrP. NsrP can utilize at least three different xanthones as its substrates to perform the dimerization reaction. This is Anthrone oxygenase nsrD from Aspergillus novofumigatus (strain IBT 16806).